A 98-amino-acid chain; its full sequence is Defensin-like protein 219 (98 aa).

An N-terminal signal peptide occupies residues 1–16; it reads MKTIFVFLTLAVLVSS. Cystine bridges form between C68-C85, C71-C90, and C75-C92.

Belongs to the DEFL family.

It localises to the secreted. This chain is Defensin-like protein 219, found in Arabidopsis thaliana (Mouse-ear cress).